The primary structure comprises 185 residues: Calcium-binding protein K-like (185 aa).

2 EF-hand domains span residues 60–95 and 96–131; these read WDEASMVRMFKLFDSDGNGVIDVKEFITALYMMTRA and PTTDKLGFLFDLFDSDKSGYLEAGEIEKLVNIVVVC. Ca(2+)-binding residues include Asp73, Asp75, Asn77, Glu84, Asp109, Asp111, Ser113, Tyr115, and Glu120.

The protein belongs to the recoverin family.

This chain is Calcium-binding protein K-like, found in Dictyostelium discoideum (Social amoeba).